Consider the following 677-residue polypeptide: Protein hook (677 aa).

One can recognise a Calponin-homology (CH) domain in the interval 6-123; sequence NEMYYSLLEW…RLLQLVLGCA (118 aa). 2 coiled-coil regions span residues 135-436 and 478-588; these read EIMC…KCGH and QTAL…AKEV.

Belongs to the hook family. Homodimer. Interacts with microtubules via its N-terminus.

Its subcellular location is the cytoplasm. The protein localises to the cytoskeleton. The protein resides in the endosome. It is found in the synapse. Functionally, involved in endocytic trafficking by stabilizing organelles of the endocytic pathway. Probably acts as a cytoskeletal linker protein required to tether endosome vesicles to the cytoskeleton. Involved in modulation of endocytosis at stages required for down-regulation of membrane proteins that control synapse size. Not involved in synaptic vesicle recycling. Required in R7 cells for boss endocytosis into multivesicular bodies (MVBs). Has a role in regulating adult longevity. This is Protein hook from Drosophila persimilis (Fruit fly).